The primary structure comprises 262 residues: Acyl-[acyl-carrier-protein]--UDP-N-acetylglucosamine O-acyltransferase (262 aa).

Belongs to the transferase hexapeptide repeat family. LpxA subfamily. As to quaternary structure, homotrimer.

It localises to the cytoplasm. It catalyses the reaction a (3R)-hydroxyacyl-[ACP] + UDP-N-acetyl-alpha-D-glucosamine = a UDP-3-O-[(3R)-3-hydroxyacyl]-N-acetyl-alpha-D-glucosamine + holo-[ACP]. It participates in glycolipid biosynthesis; lipid IV(A) biosynthesis; lipid IV(A) from (3R)-3-hydroxytetradecanoyl-[acyl-carrier-protein] and UDP-N-acetyl-alpha-D-glucosamine: step 1/6. In terms of biological role, involved in the biosynthesis of lipid A, a phosphorylated glycolipid that anchors the lipopolysaccharide to the outer membrane of the cell. In Pectobacterium atrosepticum (strain SCRI 1043 / ATCC BAA-672) (Erwinia carotovora subsp. atroseptica), this protein is Acyl-[acyl-carrier-protein]--UDP-N-acetylglucosamine O-acyltransferase.